A 911-amino-acid polypeptide reads, in one-letter code: Valine--tRNA ligase (911 aa).

Residues 53–63 (PNVTGTLHLGH) carry the 'HIGH' region motif. Positions 533 to 537 (KMSKS) match the 'KMSKS' region motif. Lysine 536 contacts ATP. Residues 845–910 (KEIERLTKEL…NRLAMLRSMQ (66 aa)) are a coiled coil.

The protein belongs to the class-I aminoacyl-tRNA synthetase family. ValS type 1 subfamily. As to quaternary structure, monomer.

The protein resides in the cytoplasm. The enzyme catalyses tRNA(Val) + L-valine + ATP = L-valyl-tRNA(Val) + AMP + diphosphate. Functionally, catalyzes the attachment of valine to tRNA(Val). As ValRS can inadvertently accommodate and process structurally similar amino acids such as threonine, to avoid such errors, it has a 'posttransfer' editing activity that hydrolyzes mischarged Thr-tRNA(Val) in a tRNA-dependent manner. This Symbiobacterium thermophilum (strain DSM 24528 / JCM 14929 / IAM 14863 / T) protein is Valine--tRNA ligase.